Here is a 520-residue protein sequence, read N- to C-terminus: Versicolorin B desaturase (520 aa).

The chain crosses the membrane as a helical span at residues 22-42 (IFTTILSIFGIALSAVAAWGI). Asn-266 and Asn-426 each carry an N-linked (GlcNAc...) asparagine glycan. Residue Cys-462 coordinates heme.

The protein belongs to the cytochrome P450 family. Requires heme as cofactor.

The protein localises to the membrane. The enzyme catalyses versicolorin B + NADPH + O2 + H(+) = versicolorin A + NADP(+) + 2 H2O. It functions in the pathway mycotoxin biosynthesis. Functionally, versicolorin B desaturase; part of the fragmented gene cluster that mediates the biosynthesis of dothistromin (DOTH), a polyketide toxin very similar in structure to the aflatoxin precursor, versicolorin B. The first step of the pathway is the conversion of acetate to norsolorinic acid (NOR) and requires the fatty acid synthase subunits hexA and hexB, as well as the polyketide synthase pksA. PksA combines a hexanoyl starter unit and 7 malonyl-CoA extender units to synthesize the precursor NOR. The hexanoyl starter unit is provided to the acyl-carrier protein (ACP) domain by the fungal fatty acid synthase hexA/hexB. The second step is the conversion of NOR to averantin (AVN) and requires the norsolorinic acid ketoreductase nor1, which catalyzes the dehydration of norsolorinic acid to form (1'S)-averantin. The cytochrome P450 monooxygenase avnA then catalyzes the hydroxylation of AVN to 5'hydroxyaverantin (HAVN). The next step is performed by adhA that transforms HAVN to averufin (AVF). Averufin might then be converted to hydroxyversicolorone by cypX and avfA. Hydroxyversicolorone is further converted versiconal hemiacetal acetate (VHA) by moxY. VHA is then the substrate for the versiconal hemiacetal acetate esterase est1 to yield versiconal (VAL). Versicolorin B synthase vbsA then converts VAL to versicolorin B (VERB) by closing the bisfuran ring. Then, the activity of the versicolorin B desaturase verB leads to versicolorin A (VERA). DotB, a predicted chloroperoxidase, may perform epoxidation of the A-ring of VERA. Alternatively, a cytochrome P450, such as cypX or avnA could catalyze this step. It is also possible that another, uncharacterized, cytochrome P450 enzyme is responsible for this step. Opening of the epoxide could potentially be achieved by the epoxide hydrolase epoA. However, epoA seems not to be required for DOTH biosynthesis, but other epoxide hydrolases may have the ability to complement this hydrolysis. Alternatively, opening of the epoxide ring could be achieved non-enzymatically. The next step is the deoxygenation of ring A to yield the 5,8-dihydroxyanthraquinone which is most likely catalyzed by the NADPH dehydrogenase encoded by ver1. The last stages of DOTH biosynthesis are proposed to involve hydroxylation of the bisfuran. OrdB and norB might have oxidative roles here. An alternative possibility is that cytochrome P450 monoogenases such as avnA and cypX might perform these steps in addition to previously proposed steps. The protein is Versicolorin B desaturase of Dothistroma septosporum (strain NZE10 / CBS 128990) (Red band needle blight fungus).